The chain runs to 415 residues: D-serine dehydratase (415 aa).

An N6-(pyridoxal phosphate)lysine modification is found at Lys-68. Pyridoxal 5'-phosphate-binding residues include Tyr-204, Tyr-211, Thr-253, Gly-279, and Asn-280. 2 residues coordinate Zn(2+): His-385 and Cys-387.

This sequence belongs to the DSD1 family. In terms of assembly, homodimer. The cofactor is pyridoxal 5'-phosphate. It depends on Zn(2+) as a cofactor.

Its subcellular location is the cytoplasm. It localises to the nucleus. The catalysed reaction is D-serine = pyruvate + NH4(+). Functionally, catalyzes the conversion of D-serine to pyruvate and ammonia. May play a role in D-serine detoxification. The sequence is that of D-serine dehydratase from Schizosaccharomyces pombe (strain 972 / ATCC 24843) (Fission yeast).